Here is a 426-residue protein sequence, read N- to C-terminus: D-tagatose-1,6-bisphosphate aldolase subunit KbaZ (426 aa).

Belongs to the GatZ/KbaZ family. KbaZ subfamily. As to quaternary structure, forms a complex with KbaY.

It functions in the pathway carbohydrate metabolism; D-tagatose 6-phosphate degradation; D-glyceraldehyde 3-phosphate and glycerone phosphate from D-tagatose 6-phosphate: step 2/2. Its function is as follows. Component of the tagatose-1,6-bisphosphate aldolase KbaYZ that is required for full activity and stability of the Y subunit. Could have a chaperone-like function for the proper and stable folding of KbaY. When expressed alone, KbaZ does not show any aldolase activity. The chain is D-tagatose-1,6-bisphosphate aldolase subunit KbaZ from Escherichia coli (strain 55989 / EAEC).